The chain runs to 245 residues: MASTQVLAGFHAVVARLRHAPESIKEIYVEASRRDKRMQTFLEQAERAGRRVHPVAAERLDGLARGTRHQGVVAVAEERSLAVGIDEVLDVIEGPALLLILDGVTDPHNLGACLRTADAAGVHAVIAPRDRAVGLNATVQRVACGAADTVPYLTVTNLARTMRELKERDVWLVGTDDQAGESMHQVDARRSMAWVMGAEGEGMRRLTRETCDQLVRIPMLGSVESLNVSVASAVCLYESVRQRQG.

Residues Gly197, Ile217, and Leu226 each coordinate S-adenosyl-L-methionine.

Belongs to the class IV-like SAM-binding methyltransferase superfamily. RNA methyltransferase TrmH family. RlmB subfamily.

Its subcellular location is the cytoplasm. It carries out the reaction guanosine(2251) in 23S rRNA + S-adenosyl-L-methionine = 2'-O-methylguanosine(2251) in 23S rRNA + S-adenosyl-L-homocysteine + H(+). Its function is as follows. Specifically methylates the ribose of guanosine 2251 in 23S rRNA. The chain is 23S rRNA (guanosine-2'-O-)-methyltransferase RlmB from Bordetella parapertussis (strain 12822 / ATCC BAA-587 / NCTC 13253).